Here is a 382-residue protein sequence, read N- to C-terminus: Prolargin (382 aa).

An N-terminal signal peptide occupies residues 1 to 20 (MRSPLCWLLPLLILASVAQG). The disordered stretch occupies residues 19–66 (QGQPTRRPRPGTGPGRRPRPRPRPTPSFPQPDEPAEPTDLPPPLPPGP). Pro residues-rich tracts occupy residues 41–50 (RPTPSFPQPD) and 57–66 (DLPPPLPPGP). LRR repeat units lie at residues 95–114 (RKVP…NNFI), 115–138 (TELP…NNRI), 139–162 (RKID…KNQL), 163–183 (EEVP…QNHI), 184–207 (SRIP…HNRL), 208–233 (SDGV…HNIL), 234–254 (RKMP…SNKI), 255–278 (ETIP…YNKL), 279–303 (TDRG…HNRI), 304–323 (SSVP…NNSI), 324–362 (EKIN…GNYL), and 363–382 (KPPI…SVVI). A glycan (N-linked (GlcNAc...) asparagine) is linked at Asn-124. Asn-289, Asn-320, and Asn-327 each carry an N-linked (GlcNAc...) asparagine glycan. A disulfide bridge links Cys-332 with Cys-373.

It belongs to the small leucine-rich proteoglycan (SLRP) family. SLRP class II subfamily. Binds the basement membrane heparan sulfate proteoglycan perlecan and triple helical collagens type I and type II. In terms of processing, glycosylated; contains heparan sulfate. As to expression, connective tissue.

It is found in the secreted. The protein resides in the extracellular space. The protein localises to the extracellular matrix. Its function is as follows. May anchor basement membranes to the underlying connective tissue. This is Prolargin (PRELP) from Homo sapiens (Human).